The following is a 476-amino-acid chain: Ribosomal protein uS12 methylthiotransferase RimO (476 aa).

The MTTase N-terminal domain occupies 7–123 (KSLYMMTLGC…IGDLLAAEAS (117 aa)). [4Fe-4S] cluster contacts are provided by Cys16, Cys52, Cys86, Cys158, Cys162, and Cys165. The 230-residue stretch at 144–373 (SMPKYTAYLK…MAIQKRINRE (230 aa)) folds into the Radical SAM core domain. The 69-residue stretch at 376-444 (KKLVGKRLEV…DYDLVARVVE (69 aa)) folds into the TRAM domain. Over residues 445-459 (RPDPKQREHTARDAH) the composition is skewed to basic and acidic residues. The disordered stretch occupies residues 445-476 (RPDPKQREHTARDAHPAPLPVAAMQRPAPRAE).

This sequence belongs to the methylthiotransferase family. RimO subfamily. [4Fe-4S] cluster is required as a cofactor.

It is found in the cytoplasm. It carries out the reaction L-aspartate(89)-[ribosomal protein uS12]-hydrogen + (sulfur carrier)-SH + AH2 + 2 S-adenosyl-L-methionine = 3-methylsulfanyl-L-aspartate(89)-[ribosomal protein uS12]-hydrogen + (sulfur carrier)-H + 5'-deoxyadenosine + L-methionine + A + S-adenosyl-L-homocysteine + 2 H(+). Functionally, catalyzes the methylthiolation of an aspartic acid residue of ribosomal protein uS12. In Myxococcus xanthus (strain DK1622), this protein is Ribosomal protein uS12 methylthiotransferase RimO.